The following is an 81-amino-acid chain: Mipartoxin-1A (81 aa).

Residues 1–21 (MKTLLLTLVVVTIVCLDLGNS) form the signal peptide. Cystine bridges form between cysteine 24/cysteine 42, cysteine 35/cysteine 61, cysteine 65/cysteine 73, and cysteine 74/cysteine 79.

Belongs to the three-finger toxin family. Short-chain subfamily. In terms of tissue distribution, expressed by the venom gland.

It localises to the secreted. Its function is as follows. Snake venom neurotoxin that blocks neuromuscular transmission, presenting a postsynaptic action through the nicotinic acetylcholine receptor (nAChR). Has no cytotoxic activity. The polypeptide is Mipartoxin-1A (Micrurus mipartitus (Red-tailed coral snake)).